Consider the following 338-residue polypeptide: Trace amine-associated receptor 1 (338 aa).

The Extracellular portion of the chain corresponds to 1–24; the sequence is MPFCHNIINISCVKNNWSNDVRAS. Intrachain disulfides connect Cys-4/Cys-177, Cys-12/Cys-87, and Cys-95/Cys-181. N-linked (GlcNAc...) asparagine glycans are attached at residues Asn-9 and Asn-16. A helical transmembrane segment spans residues 25–45; that stretch reads LYSLMALIILTTLVGNLIVIV. Residues 46–58 are Cytoplasmic-facing; sequence SISHFKQLHTPTN. The helical transmembrane segment at 59 to 79 threads the bilayer; it reads WLIHSMATVDFLLGCLVMPYS. The Extracellular segment spans residues 80-97; it reads MVRSAEHCWYFGEVFCKI. Residues 98-118 traverse the membrane as a helical segment; sequence HTSTDIMLSSASIFHLSFISI. Asp-102 provides a ligand contact to 2-phenylethylamine. Topologically, residues 119–135 are cytoplasmic; it reads DRYYAVCDPLRYKAKIN. Residues 136-156 form a helical membrane-spanning segment; the sequence is ILVVCVMIFISWSVPAVFAFG. At 157–187 the chain is on the extracellular side; it reads MIFLELNFKGAEEIYYKHVHCRGGCSVFFSK. The helical transmembrane segment at 188 to 208 threads the bilayer; sequence ISGVLAFMTSFYIPGSIMLCI. Over 209 to 251 the chain is Cytoplasmic; it reads YYRIYLIAKEQARSINDANQKLQIGLEMKNGISQSKERKAVKT. The helical transmembrane segment at 252 to 272 threads the bilayer; the sequence is LGIVMGVFLICWCPFFVCTVI. Topologically, residues 273 to 286 are extracellular; the sequence is DPFLHYTIPPTLND. A helical membrane pass occupies residues 287-307; the sequence is VLIWFGYLNSTFNPMVYAFFY. The Cytoplasmic segment spans residues 308 to 338; that stretch reads PWFRKALKMILFGKIFQKDSSRCKLFLESSS.

Belongs to the G-protein coupled receptor 1 family.

Its subcellular location is the endomembrane system. It is found in the endoplasmic reticulum membrane. The protein resides in the cell membrane. Its function is as follows. Intracellular G-protein coupled receptor for trace amines, which recognizes endogenous amine-containing metabolites such as beta-phenylethylamine (beta-PEA), 3-iodothyronamine (T1AM), isoamylamine (IAA), cadaverine (CAD), cyclohexylamine (CHA), p-tyramine (p-TYR), trimethylamine (TMA), octopamine and tryptamine. Also functions as a receptor for various drugs and psychoactive substances, such as amphetamine and methamphetamine. Unresponsive to classical biogenic amines, such as epinephrine and histamine and only partially activated by dopamine and serotonin. Expressed in both the central and peripheral nervous system: TAAR1 activation regulates the activity of several neurotransmitter signaling pathways by (1) decreasing the basal firing rates of the neurons involved and by (2) lowering the sensitivity of receptors to neurotransmitters. Ligand binding causes a conformation change that triggers signaling via guanine nucleotide-binding proteins (G proteins) and modulates the activity of downstream effectors. TAAR1 is coupled with different G(i)/G(o)-, G(s)- or G(q)/G(11) classes of G alpha proteins depending on the ligand. CAD-binding is coupled to G(i)/G(o) G alpha proteins and mediates inhibition of adenylate cyclase activity. T1AM- or beta-PEA-binding is coupled to G(s) G alpha proteins and mediates activation of adenylate cyclase activity. CHA- or IAA-binding is coupled to G(q)/G(11) G alpha proteins and activates phospholipase C-beta, releasing diacylglycerol (DAG) and inositol 1,4,5-trisphosphate (IP3) second messengers. TMA-binding is coupled with all three G(i)/G(o)-, G(s)- or G(q)/G(11) G alpha protein subtypes. The sequence is that of Trace amine-associated receptor 1 (TAAR1) from Macaca mulatta (Rhesus macaque).